Consider the following 550-residue polypeptide: Arginine--tRNA ligase (550 aa).

Residues 130 to 140 (ANPTGPIHLGG) carry the 'HIGH' region motif.

It belongs to the class-I aminoacyl-tRNA synthetase family. Monomer.

The protein localises to the cytoplasm. It catalyses the reaction tRNA(Arg) + L-arginine + ATP = L-arginyl-tRNA(Arg) + AMP + diphosphate. This chain is Arginine--tRNA ligase, found in Rhodococcus erythropolis (strain PR4 / NBRC 100887).